The sequence spans 132 residues: Putative holo-[acyl-carrier-protein] synthase (132 aa).

2 residues coordinate Mg(2+): Asp-6 and Glu-67.

It belongs to the P-Pant transferase superfamily. AcpS family.

The enzyme catalyses apo-[ACP] + CoA = holo-[ACP] + adenosine 3',5'-bisphosphate + H(+). Transfers the 4'-phosphopantetheine moiety from coenzyme A to a Ser of acyl-carrier-protein. This chain is Putative holo-[acyl-carrier-protein] synthase (new8), found in Schizosaccharomyces pombe (strain 972 / ATCC 24843) (Fission yeast).